Reading from the N-terminus, the 947-residue chain is Valine--tRNA ligase (947 aa).

The short motif at Pro-45–His-55 is the 'HIGH' region element. The 'KMSKS' region motif lies at Lys-591–Ser-595. Position 594 (Lys-594) interacts with ATP. Residues Asp-879 to Val-943 are a coiled coil.

Belongs to the class-I aminoacyl-tRNA synthetase family. ValS type 1 subfamily. Monomer.

Its subcellular location is the cytoplasm. The catalysed reaction is tRNA(Val) + L-valine + ATP = L-valyl-tRNA(Val) + AMP + diphosphate. In terms of biological role, catalyzes the attachment of valine to tRNA(Val). As ValRS can inadvertently accommodate and process structurally similar amino acids such as threonine, to avoid such errors, it has a 'posttransfer' editing activity that hydrolyzes mischarged Thr-tRNA(Val) in a tRNA-dependent manner. The sequence is that of Valine--tRNA ligase from Agrobacterium fabrum (strain C58 / ATCC 33970) (Agrobacterium tumefaciens (strain C58)).